Here is a 197-residue protein sequence, read N- to C-terminus: Glycerol-3-phosphate acyltransferase (197 aa).

The next 5 helical transmembrane spans lie at 7–27 (PSIAALIGYAFGSIPFGLLLT), 56–76 (LAALTLVLDLVKGFVPVWIAW), 82–102 (DIGWAALGAVVGHCFPIWLGF), 116–136 (FGLGWGIGLAYAFVWLVMLAI), and 157–177 (YFGRPTFVPPLVIIAVIIIWL).

The protein belongs to the PlsY family. In terms of assembly, probably interacts with PlsX.

The protein resides in the cell inner membrane. The catalysed reaction is an acyl phosphate + sn-glycerol 3-phosphate = a 1-acyl-sn-glycero-3-phosphate + phosphate. The protein operates within lipid metabolism; phospholipid metabolism. Catalyzes the transfer of an acyl group from acyl-phosphate (acyl-PO(4)) to glycerol-3-phosphate (G3P) to form lysophosphatidic acid (LPA). This enzyme utilizes acyl-phosphate as fatty acyl donor, but not acyl-CoA or acyl-ACP. The protein is Glycerol-3-phosphate acyltransferase of Erythrobacter litoralis (strain HTCC2594).